Reading from the N-terminus, the 222-residue chain is MTLEFSQLGLAPDFVDYMQGWDLQRDIHNKVVAGEKNSTVLILEHAAVYTAGKLTEDHERPFDGTPVVPVDRGGKLTWHGPGQLIAYPILKLKNRAGIRDYVERLEAIMIAVMQDYGIKAVTVKGRAGVWILADDKGPDRKIAAIGIRVLDGVTMHGVAINCSNDLAPYAQIIACGITDASVTTMSLETGRTINPADIVDRFVEEFSKHDEALVSTPEGALQ.

Residues 34–214 (GEKNSTVLIL…EFSKHDEALV (181 aa)) enclose the BPL/LPL catalytic domain. Residues 72–79 (RGGKLTWH), 144–146 (AIG), and 157–159 (GVA) each bind substrate. C175 serves as the catalytic Acyl-thioester intermediate.

The protein belongs to the LipB family.

It localises to the cytoplasm. The enzyme catalyses octanoyl-[ACP] + L-lysyl-[protein] = N(6)-octanoyl-L-lysyl-[protein] + holo-[ACP] + H(+). Its pathway is protein modification; protein lipoylation via endogenous pathway; protein N(6)-(lipoyl)lysine from octanoyl-[acyl-carrier-protein]: step 1/2. In terms of biological role, catalyzes the transfer of endogenously produced octanoic acid from octanoyl-acyl-carrier-protein onto the lipoyl domains of lipoate-dependent enzymes. Lipoyl-ACP can also act as a substrate although octanoyl-ACP is likely to be the physiological substrate. This Paenarthrobacter aurescens (strain TC1) protein is Octanoyltransferase.